A 486-amino-acid chain; its full sequence is N-succinylglutamate 5-semialdehyde dehydrogenase (486 aa).

220 to 225 (GSSRTG) is an NAD(+) binding site. Active-site residues include Glu-243 and Cys-277.

Belongs to the aldehyde dehydrogenase family. AstD subfamily.

The catalysed reaction is N-succinyl-L-glutamate 5-semialdehyde + NAD(+) + H2O = N-succinyl-L-glutamate + NADH + 2 H(+). It functions in the pathway amino-acid degradation; L-arginine degradation via AST pathway; L-glutamate and succinate from L-arginine: step 4/5. Its function is as follows. Catalyzes the NAD-dependent reduction of succinylglutamate semialdehyde into succinylglutamate. In Shewanella piezotolerans (strain WP3 / JCM 13877), this protein is N-succinylglutamate 5-semialdehyde dehydrogenase.